The chain runs to 298 residues: uncharacterized protein (298 aa).

The first 19 residues, 1 to 19, serve as a signal peptide directing secretion; it reads MFRKFLFIQLLIVTSLVKA. Residues 278 to 298 form a disordered region; that stretch reads RNNPPLKNNNAKSKNSYETYK. Over residues 279 to 298 the composition is skewed to low complexity; sequence NNPPLKNNNAKSKNSYETYK.

The protein to R.prowazekii RP296.

This is an uncharacterized protein from Rickettsia prowazekii (strain Madrid E).